The chain runs to 330 residues: Aspartate--ammonia ligase (330 aa).

Belongs to the class-II aminoacyl-tRNA synthetase family. AsnA subfamily.

It localises to the cytoplasm. The catalysed reaction is L-aspartate + NH4(+) + ATP = L-asparagine + AMP + diphosphate + H(+). The protein operates within amino-acid biosynthesis; L-asparagine biosynthesis; L-asparagine from L-aspartate (ammonia route): step 1/1. This Klebsiella pneumoniae (strain 342) protein is Aspartate--ammonia ligase.